We begin with the raw amino-acid sequence, 406 residues long: 4-hydroxy-3-methylbut-2-en-1-yl diphosphate synthase (ferredoxin) (406 aa).

Residues Cys-315, Cys-318, Cys-349, and Glu-356 each coordinate [4Fe-4S] cluster.

This sequence belongs to the IspG family. The cofactor is [4Fe-4S] cluster.

The enzyme catalyses (2E)-4-hydroxy-3-methylbut-2-enyl diphosphate + 2 oxidized [2Fe-2S]-[ferredoxin] + H2O = 2-C-methyl-D-erythritol 2,4-cyclic diphosphate + 2 reduced [2Fe-2S]-[ferredoxin] + H(+). The protein operates within isoprenoid biosynthesis; isopentenyl diphosphate biosynthesis via DXP pathway; isopentenyl diphosphate from 1-deoxy-D-xylulose 5-phosphate: step 5/6. In terms of biological role, converts 2C-methyl-D-erythritol 2,4-cyclodiphosphate (ME-2,4cPP) into 1-hydroxy-2-methyl-2-(E)-butenyl 4-diphosphate. This chain is 4-hydroxy-3-methylbut-2-en-1-yl diphosphate synthase (ferredoxin), found in Trichodesmium erythraeum (strain IMS101).